We begin with the raw amino-acid sequence, 413 residues long: Cell division protein FtsZ 2 (413 aa).

GTP contacts are provided by residues 132-134 (GTG), glutamate 171, arginine 175, and aspartate 218.

The protein belongs to the FtsZ family. As to quaternary structure, homodimer. Polymerizes to form a dynamic ring structure in a strictly GTP-dependent manner. Interacts directly with several other division proteins.

Its subcellular location is the cytoplasm. In terms of biological role, essential cell division protein that forms a contractile ring structure (Z ring) at the future cell division site. The regulation of the ring assembly controls the timing and the location of cell division. One of the functions of the FtsZ ring is to recruit other cell division proteins to the septum to produce a new cell wall between the dividing cells. Binds GTP and shows GTPase activity. The sequence is that of Cell division protein FtsZ 2 from Thermococcus kodakarensis (strain ATCC BAA-918 / JCM 12380 / KOD1) (Pyrococcus kodakaraensis (strain KOD1)).